The following is a 140-amino-acid chain: MIFSTMAKEFRYKGYTLQELEQMSLEELAKIMPARQRRTLLRRLKFGWSDQQKKLFKKILLAKEGKYKKPIKTHARNTIILPFMVGVTVHVYNGKEYVPVQIKPEMIGHYLGEFSFTTKRPKHSAPGIGATRSSAHVSKK.

A disordered region spans residues 120–140 (RPKHSAPGIGATRSSAHVSKK). Positions 131–140 (TRSSAHVSKK) are enriched in polar residues.

The protein belongs to the universal ribosomal protein uS19 family.

In terms of biological role, protein S19 forms a complex with S13 that binds strongly to the 16S ribosomal RNA. This Nanoarchaeum equitans (strain Kin4-M) protein is Small ribosomal subunit protein uS19.